The sequence spans 88 residues: Large ribosomal subunit protein bL27 (88 aa).

The segment at M1–K24 is disordered.

This sequence belongs to the bacterial ribosomal protein bL27 family.

The chain is Large ribosomal subunit protein bL27 from Ehrlichia chaffeensis (strain ATCC CRL-10679 / Arkansas).